Reading from the N-terminus, the 134-residue chain is uncharacterized protein (134 aa).

Residues 4-107 (IFTKIINREL…PTHSLSNFSF (104 aa)) enclose the HIT domain. The short motif at 91–95 (HLHIH) is the Histidine triad motif element.

This is an uncharacterized protein from Mycobacterium leprae (strain TN).